The primary structure comprises 155 residues: Small ribosomal subunit protein uS7c (155 aa).

It belongs to the universal ribosomal protein uS7 family. In terms of assembly, part of the 30S ribosomal subunit.

The protein localises to the plastid. The protein resides in the chloroplast. Its function is as follows. One of the primary rRNA binding proteins, it binds directly to 16S rRNA where it nucleates assembly of the head domain of the 30S subunit. The protein is Small ribosomal subunit protein uS7c (rps7) of Aristolochia macrophylla (Dutchman's pipe vine).